Here is a 184-residue protein sequence, read N- to C-terminus: uncharacterized protein (184 aa).

A signal peptide spans 1 to 23 (MFCLLHLCFYLANFASSIKRTHA).

Its subcellular location is the secreted. This is an uncharacterized protein from Homo sapiens (Human).